A 478-amino-acid polypeptide reads, in one-letter code: Keratin, type II cytoskeletal 8 (478 aa).

A head region spans residues 1 to 97 (MSIRVTQKSY…DPNIQAVRTQ (97 aa)). Position 9 is a phosphoserine; by PKC/PRKCE (Ser9). A Glycyl lysine isopeptide (Lys-Gly) (interchain with G-Cter in SUMO2) cross-link involves residue Lys11. Phosphoserine occurs at positions 13, 15, 21, and 22. Positions 16–44 (APRSFSSRSYTSGPGSRISSSAFSRVGSS) are disordered. Arg23 is subject to Omega-N-methylarginine. Ser24 is subject to Phosphoserine; by PKC/PRKCE. The residue at position 26 (Thr26) is a Phosphothreonine. Phosphoserine is present on residues Ser27 and Ser31. Arg32 carries the omega-N-methylarginine modification. Ser34 and Ser39 each carry phosphoserine. Arg40 is subject to Omega-N-methylarginine. 2 positions are modified to phosphoserine: Ser43 and Ser44. Arg48 carries the asymmetric dimethylarginine; alternate modification. Arg48 is modified (omega-N-methylarginine; alternate). Position 81 is a phosphoserine; by MAPK (Ser81). Positions 98–133 (EKEQIKTLNNKFASFIDKVRHLEQQNKVLETKWNLL) are coil 1A. The IF rod domain maps to 98-409 (EKEQIKTLNN…KLLEGEESRL (312 aa)). The residue at position 108 (Lys108) is an N6-malonyllysine. Residues Lys129 and Lys137 each participate in a glycyl lysine isopeptide (Lys-Gly) (interchain with G-Cter in SUMO2) cross-link. Residues 134-150 (QQQKTARSNIDNMFESY) are linker 1. The segment at 151 to 242 (INNLRRQLET…QLYEEEIREM (92 aa)) is coil 1B. A Glycyl lysine isopeptide (Lys-Gly) (interchain with G-Cter in SUMO1); alternate cross-link involves residue Lys204. Residue Lys204 forms a Glycyl lysine isopeptide (Lys-Gly) (interchain with G-Cter in SUMO2); alternate linkage. Lys214 carries the post-translational modification N6-acetyllysine. Tyr235 carries the phosphotyrosine modification. Positions 243-266 (QSQISDTSVVLEMDNNRNLDLDGI) are linker 12. A coil 2 region spans residues 267–405 (IAEVKAQYEE…ATYRKLLEGE (139 aa)). The segment at 268–389 (AEVKAQYEEI…EYQELMNVKL (122 aa)) is necessary for interaction with PNN. A Glycyl lysine isopeptide (Lys-Gly) (interchain with G-Cter in SUMO2) cross-link involves residue Lys271. Ser281 bears the Phosphoserine mark. Residue Lys292 forms a Glycyl lysine isopeptide (Lys-Gly) (interchain with G-Cter in SUMO2) linkage. A Glycyl lysine isopeptide (Lys-Gly) (interchain with G-Cter in SUMO2); alternate cross-link involves residue Lys302. At Lys302 the chain carries N6-acetyllysine; alternate. Residue Lys311 forms a Glycyl lysine isopeptide (Lys-Gly) (interchain with G-Cter in SUMO2) linkage. A Glycyl lysine isopeptide (Lys-Gly) (interchain with G-Cter in SUMO2); alternate cross-link involves residue Lys332. Position 332 is an N6-acetyllysine; alternate (Lys332). Ser337 is subject to Phosphoserine. Residue Lys400 forms a Glycyl lysine isopeptide (Lys-Gly) (interchain with G-Cter in SUMO2) linkage. The segment at 406–478 (ESRLESGMQN…VSESSDVLSK (73 aa)) is tail. Phosphoserine occurs at positions 407, 411, 417, 424, and 433. Lys467 participates in a covalent cross-link: Glycyl lysine isopeptide (Lys-Gly) (interchain with G-Cter in SUMO1); alternate. Lys467 is covalently cross-linked (Glycyl lysine isopeptide (Lys-Gly) (interchain with G-Cter in SUMO2); alternate). A phosphoserine mark is found at Ser470, Ser472, Ser473, and Ser477.

The protein belongs to the intermediate filament family. As to quaternary structure, heterotetramer of two type I and two type II keratins. Forms a heterodimer with KRT18. Associates with KRT20. Interacts with PNN. When associated with KRT19, interacts with DMD. Interacts with TCHP. Interacts with APEX1. Interacts with GPER1. Interacts with EPPK1. Interacts with PKP1 and PKP2. In terms of processing, O-glycosylated. O-GlcNAcylation at multiple sites increases solubility, and decreases stability by inducing proteasomal degradation. O-glycosylated (O-GlcNAcylated), in a cell cycle-dependent manner. As to expression, expressed in bladder, liver, exocervix and (in very low amounts) esophagus.

The protein localises to the cytoplasm. The protein resides in the nucleus. It localises to the nucleoplasm. Its subcellular location is the nucleus matrix. In terms of biological role, together with KRT19, helps to link the contractile apparatus to dystrophin at the costameres of striated muscle. The chain is Keratin, type II cytoskeletal 8 (KRT8) from Bos taurus (Bovine).